The sequence spans 1357 residues: Vascular endothelial growth factor receptor 3 (1357 aa).

Positions 1–24 are cleaved as a signal peptide; the sequence is MKRDFTFFCRIWIGIPFFSGLVNG. Ig-like C2-type domains follow at residues 25 to 121, 138 to 244, 255 to 343, 352 to 442, 453 to 583, 583 to 690, and 699 to 785; these read FSMS…YYRC, IFVF…VQVI, PEDS…RELT, PFIS…LNFT, EKEA…TTIP, PEGF…HRKY, and PRYR…ATVS. Over 25–796 the chain is Extracellular; sequence FSMSPPTLDN…IGSDDKTNVE (772 aa). N-linked (GlcNAc...) asparagine glycans are attached at residues Asn44, Asn48, Asn114, Asn216, and Asn271. 2 disulfide bridges follow: Cys51-Cys121 and Cys173-Cys225. A disulfide bridge connects residues Cys272 and Cys331. N-linked (GlcNAc...) asparagine glycosylation is found at Asn360, Asn400, and Asn440. 3 disulfide bridges follow: Cys473/Cys562, Cys493/Cys514, and Cys606/Cys674. Asn553, Asn610, Asn660, Asn707, Asn711, and Asn751 each carry an N-linked (GlcNAc...) asparagine glycan. Residues Cys720 and Cys772 are joined by a disulfide bond. The helical transmembrane segment at 797 to 817 threads the bilayer; it reads IVILIGTGVIAIFFWVLLLVI. Over 818-1357 the chain is Cytoplasmic; sequence FCNVKRVNPA…DYFSSSDQAV (540 aa). A Protein kinase domain is found at 866–1181; sequence LRLGKVLGHG…ALVEILGDLL (316 aa). ATP is bound by residues 872–880 and Lys900; that span reads LGHGAFGKV. The tract at residues 978-1007 is disordered; the sequence is QSQVRRMIEAGQASQSEHQPSTSSTNPPRV. A compositionally biased stretch (polar residues) spans 989–1005; the sequence is QASQSEHQPSTSSTNPP. Residue Asp1045 is the Proton acceptor of the active site. Phosphotyrosine; by autocatalysis occurs at positions 1071 and 1076. Residues 1192–1212 form a disordered region; it reads NVSQSSEDDGFSQASSRPPSQ. A phosphotyrosine; by autocatalysis mark is found at Tyr1226, Tyr1227, Tyr1334, and Tyr1338.

Belongs to the protein kinase superfamily. Tyr protein kinase family. CSF-1/PDGF receptor subfamily. As to quaternary structure, interacts with vegfc and vegfd. Monomer in the absence of bound vegfc or vegfd. Homodimer in the presence of bound vegfc or vegfd. In terms of processing, autophosphorylated on tyrosine residues upon ligand binding. Autophosphorylation occurs in trans, i.e. one subunit of the dimeric receptor phosphorylates tyrosine residues on the other subunit.

It localises to the cell membrane. Its subcellular location is the cytoplasm. The protein resides in the nucleus. It carries out the reaction L-tyrosyl-[protein] + ATP = O-phospho-L-tyrosyl-[protein] + ADP + H(+). With respect to regulation, present in an inactive conformation in the absence of bound ligand. Binding of vegfc or vegfd leads to dimerization and activation by autophosphorylation on tyrosine residues. Tyrosine-protein kinase that acts as a cell-surface receptor for vegf or vegfc. Combinations of multiple VEGF receptors are required for development of different blood vessel types in the embryo. Involved in angiogenesis, specifically in VEGF-induced sprouting of new blood vessels, but not required for proper vasculogenesis or hematopoiesis. This chain is Vascular endothelial growth factor receptor 3 (flt4), found in Danio rerio (Zebrafish).